The following is a 141-amino-acid chain: 16 kDa protein (141 aa).

Positions 95 to 116 are disordered; it reads ESSSATRKKSHNSKNSKKKFKE. The segment covering 100 to 113 has biased composition (basic residues); the sequence is TRKKSHNSKNSKKK.

This is 16 kDa protein from Tobacco rattle virus (strain PSG).